The sequence spans 216 residues: Probable disulfide bond formation protein D (216 aa).

Residues 1–25 (MKSNKLMALGIVFSIAVLIVIGTIA) form the signal peptide. Residues cysteine 65 and cysteine 68 are joined by a disulfide bond.

It belongs to the thioredoxin family. DsbA subfamily.

In terms of biological role, may be required for disulfide bond formation in some proteins. This is Probable disulfide bond formation protein D (bdbD) from Bacillus cereus (strain ATCC 14579 / DSM 31 / CCUG 7414 / JCM 2152 / NBRC 15305 / NCIMB 9373 / NCTC 2599 / NRRL B-3711).